A 179-amino-acid chain; its full sequence is Large ribosomal subunit protein uL5 (179 aa).

This sequence belongs to the universal ribosomal protein uL5 family. Part of the 50S ribosomal subunit; part of the 5S rRNA/L5/L18/L25 subcomplex. Contacts the 5S rRNA and the P site tRNA. Forms a bridge to the 30S subunit in the 70S ribosome.

Its function is as follows. This is one of the proteins that bind and probably mediate the attachment of the 5S RNA into the large ribosomal subunit, where it forms part of the central protuberance. In the 70S ribosome it contacts protein S13 of the 30S subunit (bridge B1b), connecting the 2 subunits; this bridge is implicated in subunit movement. Contacts the P site tRNA; the 5S rRNA and some of its associated proteins might help stabilize positioning of ribosome-bound tRNAs. In Shewanella frigidimarina (strain NCIMB 400), this protein is Large ribosomal subunit protein uL5.